The following is a 561-amino-acid chain: MRTSQYYLATLKDSPSETEGISHRLMIRSGMIRKLSSGLYAWLPTGFRVLKKIENIIRHEMNKIGAIEILMPIIQPSLIWKNSGRYEEYGLELLKFYDRKKKQFVLAPTHEEVISKIILKEINFNKVFPINFYQIYSKFRDEARPRCGTMRSKEFVMKDSYSFHLNEKSLEKTYHIMQETYKKIFNRLNLDYFVIRAKTGKIGGFISHEFHAYYNKSDVLINSYKKIFDKNNIINKFKKKIEIKNLIEINAEDILLTSDLAKKFNIDIKQIIKILLVHSIEKNHPFIAIAIREDHEIDLQKVENLNQVKKPLKFANYYEINKYFKVKKSYLGPVNIKCLLIVDKEAHCIKNFVSGANINNKYFFNINWDRDVVSYLVYDLKLCRKKYNNKKNNNSIEIGHIFQLGDKYSKPLNYSLLKDYNKKKIFMGCYGIGISRLVSTYIEQNYDSNGIIWNEEIAPFKVAIIPININFSIKVKNFSEEIYYKLCNLKIDVLFYDNVERPGIMFSNIELIGIPHILIISDKNLKNSIIEYKNRITGDKLMINYKYIFDFLLQFNINFNF.

Belongs to the class-II aminoacyl-tRNA synthetase family. ProS type 1 subfamily. As to quaternary structure, homodimer.

Its subcellular location is the cytoplasm. It catalyses the reaction tRNA(Pro) + L-proline + ATP = L-prolyl-tRNA(Pro) + AMP + diphosphate. In terms of biological role, catalyzes the attachment of proline to tRNA(Pro) in a two-step reaction: proline is first activated by ATP to form Pro-AMP and then transferred to the acceptor end of tRNA(Pro). As ProRS can inadvertently accommodate and process non-cognate amino acids such as alanine and cysteine, to avoid such errors it has two additional distinct editing activities against alanine. One activity is designated as 'pretransfer' editing and involves the tRNA(Pro)-independent hydrolysis of activated Ala-AMP. The other activity is designated 'posttransfer' editing and involves deacylation of mischarged Ala-tRNA(Pro). The misacylated Cys-tRNA(Pro) is not edited by ProRS. The protein is Proline--tRNA ligase of Wigglesworthia glossinidia brevipalpis.